Here is a 419-residue protein sequence, read N- to C-terminus: UDP-N-acetylglucosamine 1-carboxyvinyltransferase (419 aa).

Position 22–23 (22–23 (KN)) interacts with phosphoenolpyruvate. Arg91 lines the UDP-N-acetyl-alpha-D-glucosamine pocket. Residue Cys115 is the Proton donor of the active site. At Cys115 the chain carries 2-(S-cysteinyl)pyruvic acid O-phosphothioketal. Residues 120–124 (RPVDL), 160–163 (KVSV), Asp305, and Ile327 each bind UDP-N-acetyl-alpha-D-glucosamine.

The protein belongs to the EPSP synthase family. MurA subfamily.

The protein resides in the cytoplasm. It carries out the reaction phosphoenolpyruvate + UDP-N-acetyl-alpha-D-glucosamine = UDP-N-acetyl-3-O-(1-carboxyvinyl)-alpha-D-glucosamine + phosphate. The protein operates within cell wall biogenesis; peptidoglycan biosynthesis. In terms of biological role, cell wall formation. Adds enolpyruvyl to UDP-N-acetylglucosamine. This chain is UDP-N-acetylglucosamine 1-carboxyvinyltransferase, found in Serratia proteamaculans (strain 568).